The primary structure comprises 359 residues: Probable mannitol dehydrogenase (359 aa).

Positions 50, 72, 103, 106, 109, 117, and 165 each coordinate Zn(2+).

It belongs to the zinc-containing alcohol dehydrogenase family. Requires Zn(2+) as cofactor.

The enzyme catalyses D-mannitol + NAD(+) = D-mannose + NADH + H(+). Functionally, oxidizes mannitol to mannose. Provides the initial step by which translocated mannitol is committed to central metabolism and, by regulating mannitol pool size, is important in regulating salt tolerance at the cellular level. This is Probable mannitol dehydrogenase (CAD1) from Medicago sativa (Alfalfa).